A 156-amino-acid chain; its full sequence is Crossover junction endodeoxyribonuclease RuvC (156 aa).

Residues aspartate 7, glutamate 67, and aspartate 139 contribute to the active site. The Mg(2+) site is built by aspartate 7, glutamate 67, and aspartate 139.

The protein belongs to the RuvC family. As to quaternary structure, homodimer which binds Holliday junction (HJ) DNA. The HJ becomes 2-fold symmetrical on binding to RuvC with unstacked arms; it has a different conformation from HJ DNA in complex with RuvA. In the full resolvosome a probable DNA-RuvA(4)-RuvB(12)-RuvC(2) complex forms which resolves the HJ. It depends on Mg(2+) as a cofactor.

The protein localises to the cytoplasm. The catalysed reaction is Endonucleolytic cleavage at a junction such as a reciprocal single-stranded crossover between two homologous DNA duplexes (Holliday junction).. In terms of biological role, the RuvA-RuvB-RuvC complex processes Holliday junction (HJ) DNA during genetic recombination and DNA repair. Endonuclease that resolves HJ intermediates. Cleaves cruciform DNA by making single-stranded nicks across the HJ at symmetrical positions within the homologous arms, yielding a 5'-phosphate and a 3'-hydroxyl group; requires a central core of homology in the junction. The consensus cleavage sequence is 5'-(A/T)TT(C/G)-3'. Cleavage occurs on the 3'-side of the TT dinucleotide at the point of strand exchange. HJ branch migration catalyzed by RuvA-RuvB allows RuvC to scan DNA until it finds its consensus sequence, where it cleaves and resolves the cruciform DNA. The chain is Crossover junction endodeoxyribonuclease RuvC from Sphingopyxis alaskensis (strain DSM 13593 / LMG 18877 / RB2256) (Sphingomonas alaskensis).